A 94-amino-acid polypeptide reads, in one-letter code: Long neurotoxin-like OH-31 (94 aa).

The signal sequence occupies residues 1 to 19 (MKTLLLTLVVVTILCLDLG). 4 disulfides stabilise this stretch: C35/C55, C37/C66, C70/C81, and C82/C87.

Belongs to the three-finger toxin family. Long-chain subfamily. Type II alpha-neurotoxin sub-subfamily. In terms of tissue distribution, expressed by the venom gland.

Its subcellular location is the secreted. Its function is as follows. Binds with high affinity to muscular nicotinic acetylcholine receptors (nAChRs), whereas it binds with a low affinity to neuronal alpha-7/CHRNA7 nAChRs. This Ophiophagus hannah (King cobra) protein is Long neurotoxin-like OH-31.